The primary structure comprises 172 residues: RNA pyrophosphohydrolase (172 aa).

The Nudix hydrolase domain maps to 6-149; sequence GYRLNVGIVI…KRDVYRRAMK (144 aa). The Nudix box motif lies at 38–59; that stretch reads GGIDDGETPEQAMFRELYEEVG.

The protein belongs to the Nudix hydrolase family. RppH subfamily. It depends on a divalent metal cation as a cofactor.

Functionally, accelerates the degradation of transcripts by removing pyrophosphate from the 5'-end of triphosphorylated RNA, leading to a more labile monophosphorylated state that can stimulate subsequent ribonuclease cleavage. This is RNA pyrophosphohydrolase from Vibrio vulnificus (strain CMCP6).